The following is a 378-amino-acid chain: MSAAEVADHYNNVRQAGIQDRKESRIFFMRNMNNWIKSQLINDAMKLVNENGVKSPVVLDIACGKGGDLRKWDITGAKHVVMADVADVSIQQAEERYKTMHKYPHDIFGAQFIVADCTKENLDDKIEIKEPFDLVSCQFAMHYSFVDEDSARTFLKNAVGKLKLGGVFIGTLPDADRIVWAVRNGTEGKFANDVCKITYEKVDELSEGNVPLFGAKFHFSLDEQVNCPEFLAYFSLVKHLLEEHDMELLFVHNFAEAITNWLVPGRRLLESMKGLETFPNRNLSGKTDEEYLEAKAKIDSLGDNVPKFVGTLSKSEWEAICMYLVFGFRKKKTTEKNLESEAPEIKKVTPVPLNEDTDKTAEKNEERIEEKEENPSHC.

The region spanning 24–331 (SRIFFMRNMN…MYLVFGFRKK (308 aa)) is the mRNA cap 0 methyltransferase domain. 33–34 (NN) is a binding site for mRNA. Lys37, Ala62, Asp84, Asp116, Gln138, and Tyr143 together coordinate S-adenosyl-L-methionine. Basic and acidic residues-rich tracts occupy residues 335 to 347 (EKNL…EIKK) and 356 to 378 (DTDK…PSHC). Positions 335-378 (EKNLESEAPEIKKVTPVPLNEDTDKTAEKNEERIEEKEENPSHC) are disordered.

This sequence belongs to the class I-like SAM-binding methyltransferase superfamily. mRNA cap 0 methyltransferase family.

It localises to the nucleus. The enzyme catalyses a 5'-end (5'-triphosphoguanosine)-ribonucleoside in mRNA + S-adenosyl-L-methionine = a 5'-end (N(7)-methyl 5'-triphosphoguanosine)-ribonucleoside in mRNA + S-adenosyl-L-homocysteine. MRNA-capping methyltransferase that methylates the N7 position of the added guanosine to the 5'-cap structure of mRNAs. Binds RNA containing 5'-terminal GpppC. In Caenorhabditis briggsae, this protein is mRNA cap guanine-N(7) methyltransferase.